A 184-amino-acid polypeptide reads, in one-letter code: NEDD8-conjugating enzyme Ubc12 (184 aa).

Residues 30–175 (AGELRLHKDI…VRRAMTGGYV (146 aa)) enclose the UBC core domain. Cys113 functions as the Glycyl thioester intermediate in the catalytic mechanism.

This sequence belongs to the ubiquitin-conjugating enzyme family. UBC12 subfamily. Interacts with RBX1. As to expression, expressed in shoot, root and floral meristems, and in vascular tissues of leaves.

The protein operates within protein modification; protein neddylation. Functionally, accepts the ubiquitin-like protein NEDD8/RUB1 from the ECR1-AXR1 E1 complex and catalyzes its covalent attachment to other proteins. This is NEDD8-conjugating enzyme Ubc12 (RCE1) from Arabidopsis thaliana (Mouse-ear cress).